The primary structure comprises 320 residues: Homeobox-leucine zipper protein HOX25 (320 aa).

The homeobox DNA-binding region spans A79–Q139. The tract at residues K138–N182 is leucine-zipper. Disordered stretches follow at residues A181 to Q209 and D249 to S282. Residues S265 to Y278 show a composition bias toward acidic residues.

Belongs to the HD-ZIP homeobox family. Class I subfamily. Expressed in roots, leaf sheaths and blades and panicles.

It is found in the nucleus. In terms of biological role, probable transcription factor. The protein is Homeobox-leucine zipper protein HOX25 (HOX25) of Oryza sativa subsp. japonica (Rice).